The following is a 115-amino-acid chain: MDTSLIRELAELALAGSGQHCHEEALCIAEWLERLGQDEAARLIRISSLANQGRYQEALAFAHGNPWPALEPWFALCEWHLGLGAALDRRLAGLGGSSDPALADFAAGMRAQVRT.

It belongs to the YscG family. Forms a stable heterotrimeric complex with PscE and PscF/SctF in the cytoplasm. Co-stabilized by PscE.

The protein localises to the cytoplasm. Chaperone of the type III secretion system (T3SS), also called injectisome, which is used to inject bacterial effector proteins into eukaryotic host cells, facilitating the establishment and dissemination of infection. Along with PscE, prevents premature polymerization of the PscF/SctF needle protein within the cytoplasm. Required for type III secretion needle assembly. Also required for cytotoxicity by influencing PscF/SctF levels. This Pseudomonas aeruginosa (strain ATCC 15692 / DSM 22644 / CIP 104116 / JCM 14847 / LMG 12228 / 1C / PRS 101 / PAO1) protein is Type 3 secretion system chaperone PscG (pscG).